We begin with the raw amino-acid sequence, 434 residues long: Nucleobase transporter PlUacP (434 aa).

12 consecutive transmembrane segments (helical) span residues 9 to 29, 39 to 59, 63 to 83, 93 to 113, 118 to 138, 159 to 179, 181 to 201, 218 to 238, 306 to 326, 327 to 347, 365 to 385, and 394 to 414; these read LGFQ…LIVG, LAYL…LQVW, FFGI…GPMI, AIYG…GFFG, FFPP…LIPV, ALSF…TGFI, AISI…MGKV, FYFG…LVAI, VVIT…IAAL, TLLI…GMVV, LLII…PNLF, and ILTS…NFLF.

The protein belongs to the nucleobase:cation symporter-2 (NCS2) (TC 2.A.40) family.

The protein localises to the cell membrane. With respect to regulation, inhibited by the proton gradient disruptor carbonyl cyanide m-chlorophenylhydrazone (CCCP), but not by the sodium gradient disruptor ouabain. Hypoxanthine, xanthine, cytosine and uric acid act as competitive inhibitors. Its function is as follows. Uptake of the purines adenine and guanine, and the pyrimidine uracil. Transport is probably proton-dependent. In Paenibacillus larvae subsp. larvae (strain NRRL B-3650 / LMG 16245), this protein is Nucleobase transporter PlUacP.